Here is a 1015-residue protein sequence, read N- to C-terminus: SPOC domain-containing protein 1 (1015 aa).

Disordered regions lie at residues 73–97, 118–159, 213–320, and 344–406; these read MVSPEDPTLSKEGLSAKGPPPSPVL, GFSL…EPGG, LYPE…PRLE, and AASS…MTPL. Basic and acidic residues predominate over residues 304–320; sequence SQDHAEGASKKDFPRLE. Residues 373–382 are compositionally biased toward polar residues; the sequence is AHPTPCQSDP. Over residues 388-397 the composition is skewed to basic and acidic residues; sequence AEPHQQRAED. Residues 410–530 enclose the TFIIS central domain; it reads VRSTVVRAMQ…IIEQQQKELY (121 aa). Residues 643-685 form a disordered region; it reads IQKAPGPAPASSPEVLKVGETPPKEPQDRLQMPAGLKNAPPSP. Positions 688 to 791 constitute an SPOC domain; that stretch reads WEGSLDMFSI…VQQVKMVLLP (104 aa). 2 disordered regions span residues 858–906 and 967–1015; these read PEDR…PGWG and QSQD…EHEC. Residues 967–978 are compositionally biased toward polar residues; it reads QSQDSLPPSTVV.

As to quaternary structure, interacts with DNMT3A, DNMT3C and DNMT3L. Interacts with C19orf84 homolog. Interacts with SPIN1; promoting recruitment to transposons marked with histone H3 trimethylated at both 'Lys-4' and 'Lys-9' (H3K4me3K9me3).

It localises to the nucleus. The protein resides in the chromosome. Functionally, protein adapter that acts as an essential executor of PIWIL4-piRNA pathway directed transposon DNA methylation and silencing in the male embryonic germ cells. Recruited to young transposons, which are specifically marked with histone H3 trimethylated at both 'Lys-4' and 'Lys-9' (H3K4me3K9me3), via its association with SPIN1 chromatin reader, and associates with the de novo DNA methylation machinery and repressive chromatin remodeling complexes. Following this, PIWIL4 engages with nascent transposable element transcript to direct piRNA-directed DNA methylation. Not required for piRNA biosynthesis. This is SPOC domain-containing protein 1 from Mus musculus (Mouse).